The following is a 461-amino-acid chain: Probable protein phosphatase 2C 40 (461 aa).

Residues 34 to 63 (REASAERASASASAGAGGRERERRPSVAAG) form a disordered region. The PPM-type phosphatase domain maps to 57-321 (RPSVAAGQAC…DDTTCIVIDI (265 aa)). 4 residues coordinate Mn(2+): D98, G99, D273, and D312. Residues 439–453 (KKEAMEGKRHSRDSS) show a composition bias toward basic and acidic residues. Residues 439–461 (KKEAMEGKRHSRDSSSRNSGSSE) are disordered.

This sequence belongs to the PP2C family. Mg(2+) serves as cofactor. The cofactor is Mn(2+). Expressed in leaves, leaf sheaths, panicles, nodes and internodes. Expressed at low levels in roots and stems.

It localises to the nucleus. The protein localises to the cytoplasm. The enzyme catalyses O-phospho-L-seryl-[protein] + H2O = L-seryl-[protein] + phosphate. The catalysed reaction is O-phospho-L-threonyl-[protein] + H2O = L-threonyl-[protein] + phosphate. Functionally, mediates the negative regulation of osmotic and salt stress tolerance through regulation of the jasmonate and abscisic acid signaling pathways and modulation of the raffinose family oligosaccharide metabolism pathway. This Oryza sativa subsp. japonica (Rice) protein is Probable protein phosphatase 2C 40.